Here is a 693-residue protein sequence, read N- to C-terminus: tRNA (guanine(27)-N(2))-dimethyltransferase (693 aa).

The Nucleolar localization signal motif lies at 95–99 (HKLRR). The C2H2-type zinc-finger motif lies at 144-166 (YHCIICSATITRRTDMLGHVRRH). The region spanning 187 to 648 (EILKEADTDV…APLMQFKSIL (462 aa)) is the Trm1 methyltransferase domain. Positions 220, 267, 317, and 318 each coordinate S-adenosyl-L-methionine. Cys-448, Cys-451, Cys-473, and Cys-475 together coordinate Zn(2+). Lys-545 is covalently cross-linked (Glycyl lysine isopeptide (Lys-Gly) (interchain with G-Cter in SUMO2)). Ser-572 and Ser-667 each carry phosphoserine.

The protein belongs to the class I-like SAM-binding methyltransferase superfamily. Trm1 family.

The protein localises to the nucleus. Its subcellular location is the nucleolus. It carries out the reaction guanosine(27) in tRNA(Tyr) + 2 S-adenosyl-L-methionine = N(2)-dimethylguanosine(27) in tRNA(Tyr) + 2 S-adenosyl-L-homocysteine + 2 H(+). Specifically dimethylates a single guanine residue at position 27 of tRNA(Tyr) using S-adenosyl-L-methionine as donor of the methyl groups. Dimethylation at position 27 of tRNA(Tyr) is required for efficient translation of tyrosine codons. Also required to maintain 3-(3-amino-3-carboxypropyl)uridine (acp3U) in the D-loop of several cytoplasmic tRNAs. In Macaca fascicularis (Crab-eating macaque), this protein is tRNA (guanine(27)-N(2))-dimethyltransferase (TRMT1L).